The primary structure comprises 448 residues: MKIYNTYSRQLEDFQPIEPGKVKMYVCGPTVYNYIHVGNARSVVAFDLVRKYLEFRGFEVQYISNFTDVDDKIINGAKAANMTTTDFSERYIAAFYEDTDALNVKRASQNPKATEFIEAMIEFIQELVDKEFAYVSQGDVYFRVSKSKDYAKLANKNLADLLAGASGRTDEETKLKESPADFALWKSAKADEVSWQAPWGAGRPGWHIECSVMSTSLLGETIDIHGGGADLEFPHHTNEIAQSEAKTGQKFVNYWMHNGFVNVDGEKMSKSLGNFTTVHELLQVVNPQILRFFLATTHYRRPVNFTDDALTEAENNIKKIENAYRHLDEQAESNLSALTTFRNDFVAAMDEDFNIANGMTVFYDFVSWVNKGNGGPEVKEFFDQVLEILGIKFKFEQSLDSEIEAMIEARQLAREVRDFAKSDEIRDALKAQGIVLEDTKDGVRWHRE.

Cys-27 is a Zn(2+) binding site. The 'HIGH' region signature appears at 29 to 39 (PTVYNYIHVGN). The Zn(2+) site is built by Cys-210, His-235, and Glu-239. Positions 267-271 (KMSKS) match the 'KMSKS' region motif. Lys-270 lines the ATP pocket.

This sequence belongs to the class-I aminoacyl-tRNA synthetase family. As to quaternary structure, monomer. The cofactor is Zn(2+).

It is found in the cytoplasm. The enzyme catalyses tRNA(Cys) + L-cysteine + ATP = L-cysteinyl-tRNA(Cys) + AMP + diphosphate. The sequence is that of Cysteine--tRNA ligase from Lactococcus lactis subsp. lactis (strain IL1403) (Streptococcus lactis).